A 436-amino-acid chain; its full sequence is Prenyltransferase nscD (436 aa).

It belongs to the tryptophan dimethylallyltransferase family.

It functions in the pathway secondary metabolite biosynthesis. In terms of biological role, prenyltransferase; part of the gene cluster that mediates the biosynthesis of neosartoricin B, a prenylated anthracenone that probably exhibits T-cell antiproliferative activity, suggestive of a physiological role as an immunosuppressive agent. The non-reducing polyketide synthase nscA probably synthesizes and cyclizes the decaketide backbone. The hydrolase nscB then mediates the product release through hydrolysis followed by spontaneous decarboxylation. The prenyltransferase nscD catalyzes the addition of the dimethylallyl group to the aromatic C5. The FAD-dependent monooxygenase nscC is then responsible for the stereospecific hydroxylation at C2. Neosartoricin B can be converted into two additional compounds neosartoricins C and D. Neosartoricin C is a spirocyclic compound that is cyclized through the attack of C3 hydroxyl on C14, followed by dehydration. On the other hand, neosartoricin D is a further cyclized compound in which attack of C2 on C14 in neosartoricin C results in the formation of the acetal-containing dioxabicyclo-octanone ring. Both of these compounds are novel and possibly represent related metabolites of the gene cluster. The chain is Prenyltransferase nscD from Trichophyton tonsurans (strain CBS 112818) (Scalp ringworm fungus).